The primary structure comprises 446 residues: Baeyer-Villiger monooxygenase dmxR6 (446 aa).

It belongs to the AflY oxidoreductase family.

It functions in the pathway secondary metabolite biosynthesis. Baeyer-Villiger monooxygenase; part of the gene cluster that mediates the biosynthesis of the dimeric xanthones cryptosporioptides. The pathway begins with the synthesis of atrochrysone thioester by the polyketide synthase dmx-nrPKS. The atrochrysone carboxyl ACP thioesterase dmxR1 then breaks the thioester bond and releases the atrochrysone carboxylic acid from dmx-nrPKS. Atrochrysone carboxylic acid is decarboxylated by the decarboxylase dmxR15, and oxidized by the anthrone oxygenase dmxR16 to yield emodin. Emodin is then reduced to emodin hydroquinone by the oxidoreductase dmxR7. A-ring reduction by the short chain dehydrogenase dmxR18, dehydration by the scytalone dehydratase-like protein dmxR17 and probable spontaneous re-oxidation, results in overall deoxygenation to chrysophanol. Baeyer-Villiger oxidation by the Baeyer-Villiger monooxygenase (BVMO) dmxR6 then yields monodictylactone in equilibrium with monodictyphenone. In the case of the cryptosporioptides biosynthesis, monodictylactone is reduced at C-12 to an alcohol (by the short chain dehydrogenases dmxR12 or dmxR8) and hydroxylated at C-5 by dmxR9, yielding the electron-rich aromatic which could eliminate H(2)O to form the ortho-quinonemethide, followed by tautomerisation to paraquinone and complete the formal reduction to produce the 10-methylgroup. Conjugate addition of C-4a-OH to the resulting paraquinone by the monooxygenase dmxR10 then gives cyclohexadienone, which is then reduced at C-5 by the short chain dehydrogenase dmxR3 to give the dihydroxanthone. The 6,7-epoxide in the cryptosporioptides could be introduced by the cytochrome P450 monooxygenase dmxL3. The highly reducing PKS dmxL2 manufactures butyrate, which is further carboxylated by dmxL1 to form ethylmalonate. It is not yet clear whether the carboxylation occurs while the butyrate is attached to the ACP of dmxL2, but this unusual fungal metabolite could then be esterified to O-5 by the O-acetyltransferase dmxR13. Finally, dimerization performed by dmxR5 gives the observed dimers cryptosporioptides A, B and C as the final products of the pathway. This chain is Baeyer-Villiger monooxygenase dmxR6, found in Cryptosporiopsis sp. (strain 8999).